A 58-amino-acid polypeptide reads, in one-letter code: Large ribosomal subunit protein bL32 (58 aa).

Belongs to the bacterial ribosomal protein bL32 family.

The protein is Large ribosomal subunit protein bL32 of Carboxydothermus hydrogenoformans (strain ATCC BAA-161 / DSM 6008 / Z-2901).